A 398-amino-acid polypeptide reads, in one-letter code: Signal-regulatory protein beta-1 (398 aa).

A signal peptide spans 1–29 (MPVPASWPHLPSPFLLMTLLLGRLTGVAG). The 107-residue stretch at 30–136 (EDELQVIQPE…SPDDVEFKSG (107 aa)) folds into the Ig-like V-type domain. Topologically, residues 30–371 (EDELQVIQPE…EAALAPTAPL (342 aa)) are extracellular. Cystine bridges form between cysteine 54/cysteine 120 and cysteine 169/cysteine 227. Ig-like C1-type domains follow at residues 147 to 246 (PSAP…ANLS) and 253 to 347 (PTLE…YALE). N-linked (GlcNAc...) asparagine glycans are attached at residues asparagine 244, asparagine 269, and asparagine 291. A helical transmembrane segment spans residues 372–392 (LVALLLGPKLLLVVGVSAIYI). Over 393–398 (CWKQKA) the chain is Cytoplasmic.

Homodimer; disulfide-linked. Interacts with TYROBP. This interaction results in the recruitment of SYK. In terms of processing, N-glycosylated. Detected in monocytes and dendritic cells.

The protein resides in the cell membrane. Functionally, immunoglobulin-like cell surface receptor involved in the negative regulation of receptor tyrosine kinase-coupled signaling processes. Also participates in the recruitment of tyrosine kinase SYK. Triggers activation of myeloid cells when associated with TYROBP. This chain is Signal-regulatory protein beta-1 (SIRPB1), found in Homo sapiens (Human).